We begin with the raw amino-acid sequence, 175 residues long: MNTSSRIQLPSSNDAHVYDGRSNEPKASKRSYVNLTRQMRPKDALKMNISSPNLKDLSKFADPDAQQWLEGYLAGKLEDNSKTPRSNFVDPLYEELNARRKPNKPVWSLSGPLPHVLGNSVVEKLEARSRASSVSNSRLNSRTNSSVSLKGMDGSSSWKNKIKNAVSNVTDQSKR.

Residues 1 to 14 show a composition bias toward polar residues; that stretch reads MNTSSRIQLPSSND. Disordered stretches follow at residues 1 to 31 and 127 to 175; these read MNTS…SKRS and ARSR…QSKR. The segment covering 16–27 has biased composition (basic and acidic residues); it reads HVYDGRSNEPKA. Over residues 130-149 the composition is skewed to low complexity; it reads RASSVSNSRLNSRTNSSVSL. Over residues 154 to 175 the composition is skewed to polar residues; sequence GSSSWKNKIKNAVSNVTDQSKR.

The protein localises to the cytoplasm. It is found in the nucleus. This is an uncharacterized protein from Schizosaccharomyces pombe (strain 972 / ATCC 24843) (Fission yeast).